We begin with the raw amino-acid sequence, 1220 residues long: Plasma membrane calcium-transporting ATPase 1 (1220 aa).

Gly2 carries the N-acetylglycine modification. Residues 2–105 (GDMANNSVAY…KTFLQLVWEA (104 aa)) lie on the Cytoplasmic side of the membrane. A phosphoserine mark is found at Ser8 and Ser17. The helical transmembrane segment at 106–126 (LQDVTLIILEIAAIVSLGLSF) threads the bilayer. At 127-154 (YQPPEGDNALCGEVSVGEEEGEGETGWI) the chain is on the extracellular side. The chain crosses the membrane as a helical span at residues 155–175 (EGAAILLSVVCVVLVTAFNDW). At 176–366 (SKEKQFRGLQ…KEKSVLQGKL (191 aa)) the chain is on the cytoplasmic side. The tract at residues 297–356 (EEEKKDEKKKEKKNKKQDGAIENRNKAKAQDGAAMEMQPLKSEEGGDGDEKDKKKANLPK) is disordered. 2 stretches are compositionally biased toward basic and acidic residues: residues 312-325 (KQDGAIENRNKAKA) and 337-356 (KSEEGGDGDEKDKKKANLPK). Ser338 is subject to Phosphoserine. Residues 367–386 (TKLAVQIGKAGLLMSAITVI) traverse the membrane as a helical segment. Over 387-418 (ILVLYFVIDTFWVQKRPWLAECTPIYIQYFVK) the chain is Extracellular. A helical membrane pass occupies residues 419-439 (FFIIGVTVLVVAVPEGLPLAV). At 440–855 (TISLAYSVKK…RNVYDSISKF (416 aa)) the chain is on the cytoplasmic side. The active-site 4-aspartylphosphate intermediate is the Asp475. Mg(2+)-binding residues include Asp475, Thr477, Asp797, and Asp801. The chain crosses the membrane as a helical span at residues 856 to 876 (LQFQLTVNVVAVIVAFTGACI). Residues 877–882 (TQDSPL) are Extracellular-facing. Residues 883–903 (KAVQMLWVNLIMDTLASLALA) traverse the membrane as a helical segment. Residues 904–927 (TEPPTESLLLRKPYGRNKPLISRT) lie on the Cytoplasmic side of the membrane. The helical transmembrane segment at 928–948 (MMKNILGHAFYQLVVVFTLLF) threads the bilayer. Over 949–971 (AGEKFFDIDSGRNAPLHAPPSEH) the chain is Extracellular. A helical transmembrane segment spans residues 972–991 (YTIVFNTFVLMQLFNEINAR). Residues 992–1005 (KIHGERNVFEGIFN) lie on the Cytoplasmic side of the membrane. Residues 1006–1027 (NAIFCTIVLGTFVVQIIIVQFG) traverse the membrane as a helical segment. Residues 1028-1039 (GKPFSCSELSIE) lie on the Extracellular side of the membrane. The helical transmembrane segment at 1040-1060 (QWLWSIFLGMGTLLWGQLIST) threads the bilayer. Residues 1061–1220 (IPTSRLKFLK…SPLHSLETSL (160 aa)) are Cytoplasmic-facing. The segment at 1100 to 1117 (LRRGQILWFRGLNRIQTQ) is calmodulin-binding subdomain A. Thr1116 is subject to Phosphothreonine; by PKC. Positions 1118–1127 (IRVVNAFRSS) are calmodulin-binding subdomain B. Positions 1118–1220 (IRVVNAFRSS…SPLHSLETSL (103 aa)) are required for basolateral membrane targeting. Phosphoserine occurs at positions 1140 and 1155. Positions 1160 to 1220 (PLIDDTDAED…SPLHSLETSL (61 aa)) are disordered. At Thr1165 the chain carries Phosphothreonine. A phosphoserine mark is found at Ser1178 and Ser1182. The segment covering 1200 to 1220 (MNKSATSSSPGSPLHSLETSL) has biased composition (polar residues).

This sequence belongs to the cation transport ATPase (P-type) (TC 3.A.3) family. Type IIB subfamily. As to quaternary structure, monomer. Dimer. Oligomer. Calmodulin binding. Interacts with PDZD11. Interacts with SLC35G1 and STIM1. Interacts with YWHAE; interacts with the monomeric and dimeric forms of the YWHAE but prefer the monomer form; this interaction inhibits calcium-transporting ATPase activity. Interacts with NPTN; this interaction stabilizes ATP2B1 and increases ATPase activity; this interaction controls T cell calcium homeostasis following T cell activation. Interacts with EPB41; regulates small intestinal calcium absorption through regulation of membrane expression of ATP2B1.

The protein resides in the cell membrane. Its subcellular location is the basolateral cell membrane. It is found in the synapse. The protein localises to the presynaptic cell membrane. It localises to the cytoplasmic vesicle. The protein resides in the secretory vesicle. Its subcellular location is the synaptic vesicle membrane. It carries out the reaction Ca(2+)(in) + ATP + H2O = Ca(2+)(out) + ADP + phosphate + H(+). In terms of biological role, catalyzes the hydrolysis of ATP coupled with the transport of calcium from the cytoplasm to the extracellular space thereby maintaining intracellular calcium homeostasis. Plays a role in blood pressure regulation through regulation of intracellular calcium concentration and nitric oxide production leading to regulation of vascular smooth muscle cells vasoconstriction. Positively regulates bone mineralization through absorption of calcium from the intestine. Plays dual roles in osteoclast differentiation and survival by regulating RANKL-induced calcium oscillations in preosteoclasts and mediating calcium extrusion in mature osteoclasts. Regulates insulin sensitivity through calcium/calmodulin signaling pathway by regulating AKT1 activation and NOS3 activation in endothelial cells. May play a role in synaptic transmission by modulating calcium and proton dynamics at the synaptic vesicles. The sequence is that of Plasma membrane calcium-transporting ATPase 1 from Sus scrofa (Pig).